Consider the following 395-residue polypeptide: GPI-anchor transamidase (395 aa).

An N-terminal signal peptide occupies residues 1–27 (MAVTDSLSRAATVLATVLLLSFGSVAA). Residues 28–368 (SHIEDQAEQF…PKLKDWHPPG (341 aa)) lie on the Lumenal side of the membrane. Ca(2+)-binding residues include D79, I82, E118, and D120. H164 functions as the Proton donor in the catalytic mechanism. The active-site Nucleophile; acyl-thioester intermediate is the C206. Positions 206, 232, and 234 each coordinate a protein. The autoinhibitory loop stretch occupies residues 231–236 (DSLSHQ). A disulfide bridge connects residues C275 and C280. The helical transmembrane segment at 369 to 385 (GFILGLWALIIMVFFKT) threads the bilayer. Residues 386–395 (YGIKHMKFIF) are Cytoplasmic-facing.

The protein belongs to the peptidase C13 family. As to quaternary structure, heteropentamer. Part of the GPI-anchor transamidase complex, consisting of PIGK, PIGT, PIGS, PIGU and GAA1. Interacts with GPAA1. Interacts with PIGT; this interaction, via a disulfide link, stabilizes the expression of GAA1 and PIGK and links them to PIGS. Post-translationally, the disulfide bond between PIGK/GPI8 and PIGT is important for normal enzyme activity.

It is found in the endoplasmic reticulum membrane. Its pathway is glycolipid biosynthesis; glycosylphosphatidylinositol-anchor biosynthesis. In the absence of proproteins substrates, exists in an inactive state with a disrupted catalytic site by an autoinhibitory loop. The binding of proprotein substrates, particularly the CSP region, to GPI-T triggers concerted conformational changes that alleviate the inhibition by the autoinhibitory loop. Meanwhile, proprotein residues near the omega- site induce the formation of a catalytic cleft for catalysis, following which the products are released and GPI-T reverts to the inactive state. Catalytic subunit of the glycosylphosphatidylinositol-anchor (GPI-anchor) transamidase (GPI-T) complex that catalyzes the formation of the linkage between a proprotein and a GPI-anchor and participates in GPI anchored protein biosynthesis. Recognizes diverse proproteins at a C-terminal signal peptide (CSP) region that lacks consensus sequence and replaces it with a GPI-anchor via a transamidation reaction. Transamidation catalysis reaction follows a two-phase mechanism. In the acyl-enzyme phase, the carbonyl group of the proproteins's omega-site undergoes a nucleophilic attack forming an enzyme-substrate thioester bond. Followed by a general acid catalysis that allows CSP releasing, regenerating the carbonyl, and forming the acyl-enzyme intermediate. In the GPI-anchor attachment phase, the amino group of the GPI-anchor's ethanolamine phosphate, the one on third mannose (EtNP3), mediates a nucleophilic attack on the carbonyl of the acyl-enzyme intermediate, replacing the CSP, allowing GPI-anchor attachment to the omega-residue, therefore forming the product and freeing the enzyme. The sequence is that of GPI-anchor transamidase from Homo sapiens (Human).